A 51-amino-acid polypeptide reads, in one-letter code: Large ribosomal subunit protein bL33 (51 aa).

The protein belongs to the bacterial ribosomal protein bL33 family.

The sequence is that of Large ribosomal subunit protein bL33 from Pseudoalteromonas translucida (strain TAC 125).